Reading from the N-terminus, the 187-residue chain is Putative carbonic anhydrase YtiB (187 aa).

Cys-38, Asp-40, His-96, and Cys-99 together coordinate Zn(2+).

It belongs to the beta-class carbonic anhydrase family. Zn(2+) serves as cofactor.

It carries out the reaction hydrogencarbonate + H(+) = CO2 + H2O. Its function is as follows. Reversible hydration of carbon dioxide. In Bacillus subtilis (strain 168), this protein is Putative carbonic anhydrase YtiB (ytiB).